We begin with the raw amino-acid sequence, 494 residues long: MTDRPTITTTAGAPVPDNQNSLTAGPRGGIMLQDYQLIEKLAHQNRERIPERVVHAKGWGAFGSLKITGDISQYTRAKCLQPGAETPMLARFSTVAGEQGAADHERDVRGFALKFYTDEGNWDLVGNNTPVFFIRDPYKFPDFIHTQKRHPKTNLRSATAMWDYWSLSPESLHQVTILMSDRGLPQTPMHMNGYGSHTYSFWNDAGERYWVKFHFKTQQGHKFFTNEEGEAVIGKTREGYQESLFYAIENGEFPRWTVQVQIMPELDVEKTPYNPFDLTKVWPHADYPPVEIGVLELNRNPENYFAEIENAAFSPSNIVPGIGFSPDKVLQARIFSYADAHRYRLGTHYEHIPVNQPRCPVHHYHRDGQMNTYGGIRTGNPDAYYEPNSFNGPAEQPLAKEPPLRIDGDMSRYDHRVGNDDYVQVRALFGLFDEGQKSRLFSNIAAAMGGVPGEIIERQLIHFARVHPEYEAGVRQALKTAHGYEADTISTAAE.

A compositionally biased stretch (polar residues) spans 1 to 23 (MTDRPTITTTAGAPVPDNQNSLT). Positions 1-25 (MTDRPTITTTAGAPVPDNQNSLTAG) are disordered. Residues H55 and N127 contribute to the active site. Y337 serves as a coordination point for heme.

It belongs to the catalase family. Heme is required as a cofactor.

Its subcellular location is the periplasm. It catalyses the reaction 2 H2O2 = O2 + 2 H2O. Functionally, decomposes hydrogen peroxide into water and oxygen; serves to protect cells from the toxic effects of hydrogen peroxide. This chain is Catalase A (katA), found in Rhizobium meliloti (strain 1021) (Ensifer meliloti).